A 35-amino-acid polypeptide reads, in one-letter code: Pheromone-binding protein 2 (35 aa).

This sequence belongs to the PBP/GOBP family. In terms of assembly, homodimer. As to expression, antenna.

In terms of biological role, this major soluble protein in olfactory sensilla of male moths might serve to solubilize the extremely hydrophobic pheromone molecules and to transport pheromone through the aqueous lymph to receptors located on olfactory cilia. This chain is Pheromone-binding protein 2, found in Lymantria dispar (Gypsy moth).